The chain runs to 146 residues: 3-hydroxyacyl-[acyl-carrier-protein] dehydratase FabZ (146 aa).

Residue His48 is part of the active site.

Belongs to the thioester dehydratase family. FabZ subfamily.

It localises to the cytoplasm. It carries out the reaction a (3R)-hydroxyacyl-[ACP] = a (2E)-enoyl-[ACP] + H2O. Functionally, involved in unsaturated fatty acids biosynthesis. Catalyzes the dehydration of short chain beta-hydroxyacyl-ACPs and long chain saturated and unsaturated beta-hydroxyacyl-ACPs. This is 3-hydroxyacyl-[acyl-carrier-protein] dehydratase FabZ from Campylobacter jejuni subsp. jejuni serotype O:6 (strain 81116 / NCTC 11828).